The sequence spans 310 residues: Methionyl-tRNA formyltransferase (310 aa).

(6S)-5,6,7,8-tetrahydrofolate is bound at residue 109 to 112 (SLLP). The disordered stretch occupies residues 283 to 310 (QPQGKKAMPAADWARGARIGDGERFGDD). Residues 300-310 (RIGDGERFGDD) show a composition bias toward basic and acidic residues.

Belongs to the Fmt family.

It carries out the reaction L-methionyl-tRNA(fMet) + (6R)-10-formyltetrahydrofolate = N-formyl-L-methionyl-tRNA(fMet) + (6S)-5,6,7,8-tetrahydrofolate + H(+). Functionally, attaches a formyl group to the free amino group of methionyl-tRNA(fMet). The formyl group appears to play a dual role in the initiator identity of N-formylmethionyl-tRNA by promoting its recognition by IF2 and preventing the misappropriation of this tRNA by the elongation apparatus. This Thermobifida fusca (strain YX) protein is Methionyl-tRNA formyltransferase.